Here is a 46-residue protein sequence, read N- to C-terminus: Protein YpdJ (46 aa).

In terms of biological role, may be involved in H(2) production during fermentative growth. This chain is Protein YpdJ (ypdJ), found in Escherichia coli (strain K12).